A 398-amino-acid polypeptide reads, in one-letter code: Aldo-keto reductase ausK (398 aa).

Asp76 is a binding site for NADP(+). Catalysis depends on Tyr81, which acts as the Proton donor. His156 contacts substrate. NADP(+) is bound by residues 186–187 (CN), Gln212, 241–251 (DALGSGKFQSR), and 317–325 (RKIQHLHDN).

Belongs to the aldo/keto reductase family. Aldo/keto reductase 2 subfamily. In terms of assembly, homodimer.

The protein operates within secondary metabolite biosynthesis; terpenoid biosynthesis. Aldo-keto reductase; part of the gene cluster B that mediates the biosynthesis of austinol and dehydroaustinol, two fungal meroterpenoids. The first step of the pathway is the synthesis of 3,5-dimethylorsellinic acid by the polyketide synthase ausA. 3,5-dimethylorsellinic acid is then prenylated by the polyprenyl transferase ausN. Further epoxidation by the FAD-dependent monooxygenase ausM and cyclization by the probable terpene cyclase ausL lead to the formation of protoaustinoid A. Protoaustinoid A is then oxidized to spiro-lactone preaustinoid A3 by the combined action of the FAD-binding monooxygenases ausB and ausC, and the dioxygenase ausE. Acid-catalyzed keto-rearrangement and ring contraction of the tetraketide portion of preaustinoid A3 by ausJ lead to the formation of preaustinoid A4. The aldo-keto reductase ausK, with the help of ausH, is involved in the next step by transforming preaustinoid A4 into isoaustinone which is in turn hydroxylated by the P450 monooxygenase ausI to form austinolide. Finally, the cytochrome P450 monooxygenase ausG modifies austinolide to austinol. Austinol can be further modified to dehydroaustinol which forms a diffusible complex with diorcinol that initiates conidiation. Due to genetic rearrangements of the clusters and the subsequent loss of some enzymes, the end products of the Emericella nidulans austinoid biosynthesis clusters are austinol and dehydroaustinol, even if additional enzymes, such as the O-acetyltransferase ausQ and the cytochrome P450 monooxygenase ausR are still functional. This chain is Aldo-keto reductase ausK, found in Emericella nidulans (strain FGSC A4 / ATCC 38163 / CBS 112.46 / NRRL 194 / M139) (Aspergillus nidulans).